The chain runs to 269 residues: Undecaprenyl-diphosphatase (269 aa).

8 consecutive transmembrane segments (helical) span residues 4 to 24, 50 to 70, 86 to 106, 113 to 133, 146 to 166, 186 to 206, 220 to 240, and 246 to 266; these read IELW…WLPI, LWLH…PYWL, LFAI…YKVL, ATGD…GLLL, VNVV…IPGI, AVWL…ALEL, WMVT…EVLL, and LDFS…PLAA.

It belongs to the UppP family.

It is found in the cell membrane. The enzyme catalyses di-trans,octa-cis-undecaprenyl diphosphate + H2O = di-trans,octa-cis-undecaprenyl phosphate + phosphate + H(+). Its function is as follows. Catalyzes the dephosphorylation of undecaprenyl diphosphate (UPP). The polypeptide is Undecaprenyl-diphosphatase (Methanopyrus kandleri (strain AV19 / DSM 6324 / JCM 9639 / NBRC 100938)).